Consider the following 969-residue polypeptide: Isoleucine--tRNA ligase (969 aa).

The short motif at 68–78 is the 'HIGH' region element; the sequence is PYANGALHMGH. Glutamate 585 provides a ligand contact to L-isoleucyl-5'-AMP. The 'KMSKS' region motif lies at 626 to 630; it reads KMSKS. Lysine 629 contributes to the ATP binding site. Zn(2+)-binding residues include cysteine 939, cysteine 942, cysteine 959, and cysteine 962.

Belongs to the class-I aminoacyl-tRNA synthetase family. IleS type 1 subfamily. In terms of assembly, monomer. The cofactor is Zn(2+).

It is found in the cytoplasm. The catalysed reaction is tRNA(Ile) + L-isoleucine + ATP = L-isoleucyl-tRNA(Ile) + AMP + diphosphate. In terms of biological role, catalyzes the attachment of isoleucine to tRNA(Ile). As IleRS can inadvertently accommodate and process structurally similar amino acids such as valine, to avoid such errors it has two additional distinct tRNA(Ile)-dependent editing activities. One activity is designated as 'pretransfer' editing and involves the hydrolysis of activated Val-AMP. The other activity is designated 'posttransfer' editing and involves deacylation of mischarged Val-tRNA(Ile). This is Isoleucine--tRNA ligase from Prochlorococcus marinus (strain MIT 9211).